The following is a 285-amino-acid chain: Dihydropteroate synthase (285 aa).

The Pterin-binding domain maps to 25–271 (TLVMGILNVT…DVKQIARMAK (247 aa)). Position 32 (Asn32) interacts with Mg(2+). (7,8-dihydropterin-6-yl)methyl diphosphate is bound by residues Thr72, Asp106, Asn125, Asp189, Lys225, and 259-261 (RVH).

The protein belongs to the DHPS family. Mg(2+) serves as cofactor.

The enzyme catalyses (7,8-dihydropterin-6-yl)methyl diphosphate + 4-aminobenzoate = 7,8-dihydropteroate + diphosphate. Its pathway is cofactor biosynthesis; tetrahydrofolate biosynthesis; 7,8-dihydrofolate from 2-amino-4-hydroxy-6-hydroxymethyl-7,8-dihydropteridine diphosphate and 4-aminobenzoate: step 1/2. In terms of biological role, catalyzes the condensation of para-aminobenzoate (pABA) with 6-hydroxymethyl-7,8-dihydropterin diphosphate (DHPt-PP) to form 7,8-dihydropteroate (H2Pte), the immediate precursor of folate derivatives. This Bacillus subtilis (strain 168) protein is Dihydropteroate synthase (sul).